The primary structure comprises 633 residues: MHGLLLAAAGLLSLPLHVLAHPQPSTNLAGRGVDLDAYRMADRSSYMSSDDMKLKQPAIASLSGGNYVDTATEVVKRMMPGMTFRMVDDHYVGESGISHVYFRQTMHGMDIDNADFNVNIGKDGKVLSVGHSFYTGPAPDKAPVEKRDFSDPMQAFHGACKALNLSINSDKATIQTMNEHEVMFMGTSGAMSDPQGKLCYMAKEDGTLALTWRVETDMGDNWLLSYVDAKETDKVHNVVDYVSHATYQVYKWPIPDPTEGKREIVENPWNLKTSPFTWISDGKTNYTTTRGNNAIAQANFDGGEDYLNNYRPDSKNLKFEYPYAPNMSPPKSYIDASVTQLFYSANMVHDLYYMLGFTEKAGNFQVNNHGQGGKGNDFVILNAQDGSGTNNANFATPPDGKPGRMRVYIWTKAKPSRGSSFEAGTVIHEYTHGLSNRLCGGPANAGCLNGMESGGMGEGWGDFFATAIRLKPNDNRNSNYVHGEWVNNSPKGNRLYPYSTNLQTNPLVYTSCNKYNEVHAIGTVWCSILYEVLWNLIDKHGKNDGPTPVFENGVPNDGKYLALKLVLDGMAIQPCKPTFVQARDAIIDADMNLTKGSNKCELWKAFAKRGLGVGAKYDPKNRTGSKAVPKECQ.

Positions 1–20 are cleaved as a signal peptide; it reads MHGLLLAAAGLLSLPLHVLA. Positions 21 to 244 are excised as a propeptide; it reads HPQPSTNLAG…VHNVVDYVSH (224 aa). Asn-285 carries an N-linked (GlcNAc...) asparagine glycan. Residue His-428 coordinates Zn(2+). The active site involves Glu-429. His-432 is a binding site for Zn(2+). N-linked (GlcNAc...) asparagine glycans are attached at residues Asn-592 and Asn-621.

Belongs to the peptidase M36 family. The cofactor is Zn(2+).

It localises to the secreted. In terms of biological role, secreted metalloproteinase probably acting as a virulence factor. The protein is Probable extracellular metalloproteinase 5 (MEP5) of Trichophyton verrucosum (strain HKI 0517).